We begin with the raw amino-acid sequence, 332 residues long: Probable xyloglucan endotransglucosylase/hydrolase protein 28 (332 aa).

A signal peptide spans 1–22 (MGFITRFLVFMSLFTSLVSGFA). In terms of domain architecture, GH16 spans 23–223 (LQKLPLIQFD…YKYAPYVSQF (201 aa)). Glu-108 acts as the Nucleophile in catalysis. The Proton donor role is filled by Glu-112. Xyloglucan-binding positions include Glu-112 and 125 to 127 (QTN). Residue Asn-131 is glycosylated (N-linked (GlcNAc...) asparagine). Xyloglucan-binding positions include 135 to 139 (HLGRE), 202 to 203 (KW), Gly-207, and Arg-282. A disulfide bond links Cys-277 and Cys-290. Residues 313–326 (HGHRRGKHRSRSRL) are compositionally biased toward basic residues. The segment at 313-332 (HGHRRGKHRSRSRLARTESI) is disordered.

This sequence belongs to the glycosyl hydrolase 16 family. XTH group 3 subfamily. Post-translationally, contains at least one intrachain disulfide bond essential for its enzymatic activity. Expressed in 7 day old seedlings, roots, rosette leaves, internodes between nodes bearing axillary shoots, nodes bearing flowers, flower buds and siliques.

It localises to the secreted. It is found in the cell wall. The protein localises to the extracellular space. The protein resides in the apoplast. It carries out the reaction breaks a beta-(1-&gt;4) bond in the backbone of a xyloglucan and transfers the xyloglucanyl segment on to O-4 of the non-reducing terminal glucose residue of an acceptor, which can be a xyloglucan or an oligosaccharide of xyloglucan.. In terms of biological role, catalyzes xyloglucan endohydrolysis (XEH) and/or endotransglycosylation (XET). Cleaves and religates xyloglucan polymers, an essential constituent of the primary cell wall, and thereby participates in cell wall construction of growing tissues. This chain is Probable xyloglucan endotransglucosylase/hydrolase protein 28 (XTH28), found in Arabidopsis thaliana (Mouse-ear cress).